Reading from the N-terminus, the 254-residue chain is MSAAFTVVIPARYASTRLPGKPLQDIAGKPMVQHVWEQAKKSSASRVVVATDDARIVEACKVFGAEVLLTREDHNSGTDRLAEVATQLGLPADAIVVNVQGDEPLVPPSIIDQVAANLATNPQAGIATLAEPIEDVTALFNPNVVKVVADKSGLALTFSRAPLAWARDAFAKSRDVLPAGVPYRRHIGIYAYRAGFLHDFVAWGPCWLEDTECLEQLRALYNGVRIHVADALEAPAAGVDTAEDLERVRRLLGA.

Belongs to the KdsB family.

It is found in the cytoplasm. It catalyses the reaction 3-deoxy-alpha-D-manno-oct-2-ulosonate + CTP = CMP-3-deoxy-beta-D-manno-octulosonate + diphosphate. The protein operates within nucleotide-sugar biosynthesis; CMP-3-deoxy-D-manno-octulosonate biosynthesis; CMP-3-deoxy-D-manno-octulosonate from 3-deoxy-D-manno-octulosonate and CTP: step 1/1. It participates in bacterial outer membrane biogenesis; lipopolysaccharide biosynthesis. Functionally, activates KDO (a required 8-carbon sugar) for incorporation into bacterial lipopolysaccharide in Gram-negative bacteria. This Ectopseudomonas mendocina (strain ymp) (Pseudomonas mendocina) protein is 3-deoxy-manno-octulosonate cytidylyltransferase.